A 279-amino-acid polypeptide reads, in one-letter code: Beta-porphyranase E (279 aa).

A signal peptide spans M1–G18. Residues Q19–V277 form the GH16 domain. Positions 56, 60, 141, 146, and 243 each coordinate substrate. E141 (nucleophile) is an active-site residue. The active-site Proton donor is the E146.

The protein belongs to the glycosyl hydrolase 16 family.

It localises to the periplasm. The catalysed reaction is Hydrolysis of beta-D-galactopyranose-(1-&gt;4)-alpha-L-galactopyranose-6-sulfate linkages in porphyran.. Functionally, cleaves the sulfated polysaccharide porphyran at the (1-&gt;4) linkages between beta-D-galactopyranose and alpha-L-galactopyranose-6-sulfate, forming mostly the disaccharide alpha-L-galactopyranose-6-sulfate-(1-&gt;3)-beta-D-galactose. The polypeptide is Beta-porphyranase E (porE) (Zobellia galactanivorans (strain DSM 12802 / CCUG 47099 / CIP 106680 / NCIMB 13871 / Dsij)).